We begin with the raw amino-acid sequence, 382 residues long: Trophoblast glycoprotein-like (382 aa).

Positions 1 to 26 (MAPRAGQPGLQGLLLVAAALSQPAAP) are cleaved as a signal peptide. 2 cysteine pairs are disulfide-bonded: Cys27–Cys33 and Cys31–Cys43. The Extracellular segment spans residues 27–307 (CPFQCYCFGG…EAAGPELEAS (281 aa)). 5 LRR repeats span residues 57 to 80 (PPDA…AFAG), 93 to 116 (LPLL…AFDG), 117 to 140 (LPSL…AFRG), 171 to 194 (LAEL…ALRL), and 196 to 217 (RLEQ…ELRA). N-linked (GlcNAc...) asparagine glycosylation is present at Asn62. 2 cysteine pairs are disulfide-bonded: Cys238–Cys264 and Cys240–Cys285. Residues 308–328 (YVFFGLVLALIGLIFLMVLYL) form a helical membrane-spanning segment. Over 329-382 (NRRGIQRWMRNLREACRDQMEGYHYRYEQDADPRRAPAPAAPAGSRATSPGSGL) the chain is Cytoplasmic. Positions 358-382 (DADPRRAPAPAAPAGSRATSPGSGL) are disordered. Positions 365–382 (PAPAAPAGSRATSPGSGL) are enriched in low complexity.

Its subcellular location is the membrane. In Homo sapiens (Human), this protein is Trophoblast glycoprotein-like (TPBGL).